The sequence spans 142 residues: Large ribosomal subunit protein uL13 (142 aa).

It belongs to the universal ribosomal protein uL13 family. As to quaternary structure, part of the 50S ribosomal subunit.

Functionally, this protein is one of the early assembly proteins of the 50S ribosomal subunit, although it is not seen to bind rRNA by itself. It is important during the early stages of 50S assembly. This is Large ribosomal subunit protein uL13 from Alkaliphilus metalliredigens (strain QYMF).